We begin with the raw amino-acid sequence, 218 residues long: Adenylate kinase (218 aa).

Position 10–15 (10–15 (GAGKGT)) interacts with ATP. The segment at 30-59 (STGDMLRNAAKEGKPLGLEAKKIMDAGQLV) is NMP. Residues Thr31, Arg36, 57–59 (QLV), 85–88 (GFPR), and Gln92 contribute to the AMP site. Residues 122–159 (GRRVHLASGRSYHVMFNPPKQEGLDDATGEPLVQRADD) are LID. ATP contacts are provided by residues Arg123 and 132-133 (SY). 2 residues coordinate AMP: Arg156 and Arg167. ATP is bound at residue Gly203.

Belongs to the adenylate kinase family. As to quaternary structure, monomer.

It localises to the cytoplasm. The enzyme catalyses AMP + ATP = 2 ADP. It functions in the pathway purine metabolism; AMP biosynthesis via salvage pathway; AMP from ADP: step 1/1. Its function is as follows. Catalyzes the reversible transfer of the terminal phosphate group between ATP and AMP. Plays an important role in cellular energy homeostasis and in adenine nucleotide metabolism. The chain is Adenylate kinase from Chlorobium chlorochromatii (strain CaD3).